Here is a 339-residue protein sequence, read N- to C-terminus: D-erythrose-4-phosphate dehydrogenase (339 aa).

Position 11 to 12 (11 to 12 (RI)) interacts with NAD(+). Substrate-binding positions include 153–155 (SCT), Arg-199, 212–213 (TK), and Arg-235. Catalysis depends on Cys-154, which acts as the Nucleophile. Position 317 (Asn-317) interacts with NAD(+).

It belongs to the glyceraldehyde-3-phosphate dehydrogenase family. Epd subfamily. In terms of assembly, homotetramer.

It localises to the cytoplasm. It catalyses the reaction D-erythrose 4-phosphate + NAD(+) + H2O = 4-phospho-D-erythronate + NADH + 2 H(+). Its pathway is cofactor biosynthesis; pyridoxine 5'-phosphate biosynthesis; pyridoxine 5'-phosphate from D-erythrose 4-phosphate: step 1/5. Functionally, catalyzes the NAD-dependent conversion of D-erythrose 4-phosphate to 4-phosphoerythronate. In Shewanella halifaxensis (strain HAW-EB4), this protein is D-erythrose-4-phosphate dehydrogenase.